A 287-amino-acid chain; its full sequence is Shikimate kinase 3, chloroplastic (287 aa).

A chloroplast-targeting transit peptide spans 1–57 (MDAGVGLRAKPGAWAGLGNPRRSSTARVPVRFAVEKFAQPLVLGSDRRSCGAKLKVS). Position 98 to 105 (98 to 105 (GMMGSGKT)) interacts with ATP. Threonine 105 lines the Mg(2+) pocket. Positions 123, 148, and 170 each coordinate substrate. Arginine 209 is an ATP binding site.

The protein belongs to the shikimate kinase family. The cofactor is Mg(2+). As to expression, expressed in panicles.

It localises to the plastid. It is found in the chloroplast. The catalysed reaction is shikimate + ATP = 3-phosphoshikimate + ADP + H(+). The protein operates within metabolic intermediate biosynthesis; chorismate biosynthesis; chorismate from D-erythrose 4-phosphate and phosphoenolpyruvate: step 5/7. Catalyzes the specific phosphorylation of the 3-hydroxyl group of shikimic acid using ATP as a cosubstrate. The chain is Shikimate kinase 3, chloroplastic (SK3) from Oryza sativa subsp. japonica (Rice).